A 98-amino-acid polypeptide reads, in one-letter code: Large ribosomal subunit protein uL23 (98 aa).

Belongs to the universal ribosomal protein uL23 family. Part of the 50S ribosomal subunit. Contacts protein L29, and trigger factor when it is bound to the ribosome.

Functionally, one of the early assembly proteins it binds 23S rRNA. One of the proteins that surrounds the polypeptide exit tunnel on the outside of the ribosome. Forms the main docking site for trigger factor binding to the ribosome. This Alcanivorax borkumensis (strain ATCC 700651 / DSM 11573 / NCIMB 13689 / SK2) protein is Large ribosomal subunit protein uL23.